A 105-amino-acid chain; its full sequence is V-type ATP synthase subunit F (105 aa).

This sequence belongs to the V-ATPase F subunit family.

Functionally, produces ATP from ADP in the presence of a proton gradient across the membrane. This Fusobacterium nucleatum subsp. nucleatum (strain ATCC 25586 / DSM 15643 / BCRC 10681 / CIP 101130 / JCM 8532 / KCTC 2640 / LMG 13131 / VPI 4355) protein is V-type ATP synthase subunit F.